The primary structure comprises 162 residues: Succinate dehydrogenase assembly factor 2, mitochondrial (162 aa).

The transit peptide at 1 to 35 directs the protein to the mitochondrion; sequence MHNMFPALTKTLSLQGYKIINSQTGSAAWSCGRRW.

This sequence belongs to the SDHAF2 family. As to quaternary structure, interacts with the flavoprotein subunit within the SDH catalytic dimer.

The protein resides in the mitochondrion matrix. In terms of biological role, plays an essential role in the assembly of succinate dehydrogenase (SDH), an enzyme complex (also referred to as respiratory complex II) that is a component of both the tricarboxylic acid (TCA) cycle and the mitochondrial electron transport chain, and which couples the oxidation of succinate to fumarate with the reduction of ubiquinone (coenzyme Q) to ubiquinol. Required for flavinylation (covalent attachment of FAD) of the flavoprotein subunit of the SDH catalytic dimer. This Saccharomyces cerevisiae (strain RM11-1a) (Baker's yeast) protein is Succinate dehydrogenase assembly factor 2, mitochondrial.